The sequence spans 336 residues: Protein-glutamate methylesterase/protein-glutamine glutaminase 3 (336 aa).

The 118-residue stretch at 2–119 (KIAIVNDMPM…PNPREAAAPL (118 aa)) folds into the Response regulatory domain. 4-aspartylphosphate is present on Asp-53. In terms of domain architecture, CheB-type methylesterase spans 147-336 (VSRRDRLVAI…APRLMEVFTQ (190 aa)). Active-site residues include Ser-159, His-186, and Asp-279.

Belongs to the CheB family. Post-translationally, phosphorylated by CheA. Phosphorylation of the N-terminal regulatory domain activates the methylesterase activity.

Its subcellular location is the cytoplasm. It catalyses the reaction [protein]-L-glutamate 5-O-methyl ester + H2O = L-glutamyl-[protein] + methanol + H(+). The enzyme catalyses L-glutaminyl-[protein] + H2O = L-glutamyl-[protein] + NH4(+). Its function is as follows. Involved in chemotaxis. Part of a chemotaxis signal transduction system that modulates chemotaxis in response to various stimuli. Catalyzes the demethylation of specific methylglutamate residues introduced into the chemoreceptors (methyl-accepting chemotaxis proteins or MCP) by CheR. Also mediates the irreversible deamidation of specific glutamine residues to glutamic acid. The sequence is that of Protein-glutamate methylesterase/protein-glutamine glutaminase 3 from Pseudomonas syringae pv. tomato (strain ATCC BAA-871 / DC3000).